Here is a 360-residue protein sequence, read N- to C-terminus: DNA replication and repair protein RecF (360 aa).

ATP is bound at residue 30–37; sequence GQNGSGKT.

Belongs to the RecF family.

It localises to the cytoplasm. The RecF protein is involved in DNA metabolism; it is required for DNA replication and normal SOS inducibility. RecF binds preferentially to single-stranded, linear DNA. It also seems to bind ATP. This is DNA replication and repair protein RecF from Shewanella sp. (strain MR-7).